The chain runs to 475 residues: Bifunctional protein HldE (475 aa).

The segment at Met1–His321 is ribokinase. Asn197–Glu200 contacts ATP. Residue Asp266 is part of the active site. The tract at residues Met346 to Asn475 is cytidylyltransferase.

The protein in the N-terminal section; belongs to the carbohydrate kinase PfkB family. This sequence in the C-terminal section; belongs to the cytidylyltransferase family. As to quaternary structure, homodimer.

It carries out the reaction D-glycero-beta-D-manno-heptose 7-phosphate + ATP = D-glycero-beta-D-manno-heptose 1,7-bisphosphate + ADP + H(+). The catalysed reaction is D-glycero-beta-D-manno-heptose 1-phosphate + ATP + H(+) = ADP-D-glycero-beta-D-manno-heptose + diphosphate. Its pathway is nucleotide-sugar biosynthesis; ADP-L-glycero-beta-D-manno-heptose biosynthesis; ADP-L-glycero-beta-D-manno-heptose from D-glycero-beta-D-manno-heptose 7-phosphate: step 1/4. The protein operates within nucleotide-sugar biosynthesis; ADP-L-glycero-beta-D-manno-heptose biosynthesis; ADP-L-glycero-beta-D-manno-heptose from D-glycero-beta-D-manno-heptose 7-phosphate: step 3/4. Its function is as follows. Catalyzes the phosphorylation of D-glycero-D-manno-heptose 7-phosphate at the C-1 position to selectively form D-glycero-beta-D-manno-heptose-1,7-bisphosphate. Catalyzes the ADP transfer from ATP to D-glycero-beta-D-manno-heptose 1-phosphate, yielding ADP-D-glycero-beta-D-manno-heptose. This Coxiella burnetii (strain Dugway 5J108-111) protein is Bifunctional protein HldE.